Reading from the N-terminus, the 77-residue chain is Small ribosomal subunit protein bS18 (77 aa).

It belongs to the bacterial ribosomal protein bS18 family. As to quaternary structure, part of the 30S ribosomal subunit. Forms a tight heterodimer with protein bS6.

Functionally, binds as a heterodimer with protein bS6 to the central domain of the 16S rRNA, where it helps stabilize the platform of the 30S subunit. This is Small ribosomal subunit protein bS18 from Lactobacillus gasseri (strain ATCC 33323 / DSM 20243 / BCRC 14619 / CIP 102991 / JCM 1131 / KCTC 3163 / NCIMB 11718 / NCTC 13722 / AM63).